A 114-amino-acid chain; its full sequence is Large ribosomal subunit protein eL31 (114 aa).

Belongs to the eukaryotic ribosomal protein eL31 family.

The protein is Large ribosomal subunit protein eL31 (RPL31) of Eremothecium gossypii (strain ATCC 10895 / CBS 109.51 / FGSC 9923 / NRRL Y-1056) (Yeast).